We begin with the raw amino-acid sequence, 21 residues long: 40 kDa major outer membrane protein (21 aa).

Disulfide bond interactions within and between MOMP molecules and other components form high molecular-weight oligomers.

Its subcellular location is the cell outer membrane. Functionally, structural rigidity of the outer membrane of elementary bodies and porin forming, permitting diffusion of solutes through the intracellular reticulate body membrane. This Actinobacillus pleuropneumoniae (Haemophilus pleuropneumoniae) protein is 40 kDa major outer membrane protein.